We begin with the raw amino-acid sequence, 154 residues long: Aspartate carbamoyltransferase regulatory chain (154 aa).

Residues Cys-111, Cys-116, Cys-139, and Cys-142 each contribute to the Zn(2+) site.

It belongs to the PyrI family. In terms of assembly, contains catalytic and regulatory chains. It depends on Zn(2+) as a cofactor.

Involved in allosteric regulation of aspartate carbamoyltransferase. In Parabacteroides distasonis (strain ATCC 8503 / DSM 20701 / CIP 104284 / JCM 5825 / NCTC 11152), this protein is Aspartate carbamoyltransferase regulatory chain.